Reading from the N-terminus, the 956-residue chain is MRPEGAGMDLGGGDGERLLEKSRREHWQLLGNLKTTVEGLVSANCPNVWSKYGGLERLCRDMQNILYHGLIHDQVCCRQADYWQFVKDIRWLSPHSALHVEKFISLHESDQSDTDSVSERAVAELWLQHSLQCHCLSAQLRPLLGDRQYIRKFYTETAFLLSDAHVTAMLQCLEAVEQNNPRLLAQIDASMFARKQESPLLVTKSQSLTALPGSTYTPPASYAQHSYFGSSSSLQSMPQSSHSSERRSTSFSLSGPSWQPQEDRECLSPAETQTTPAPLPSDSTLAQDSPLTAQEMSDSTLTSPLEASWVSSQNDSPSDVSEGPEYLAIGNPAPHGRTASCESHSSNGESSSSHLFSSSSSQKLESAASSLGDQEEGRQSQAGSVLRRSSFSEGQTAPVASGTKKSHIRSHSDTNIASRGAAGGPRNITIIVEDPIAEGGQYLCSGEGMFRRPSEGQSLISYLSEQDFGSCADLEKENAHFSISESLIAAIELMKCNMMSQCLEEEEVEEEDSDREIQELKQKIRLRRQQIRTKNLLPAYRETENGSFRVTSSSSQFSSRDSTQLSESGSAEDADDLEIQDADIRRSAVSNGKSSFSQNLSHCFLHSTSAEAVAMGLLKQFEGMQLPAASELEWLVPEHDAPQKLLPIPDSLPISPDDGQHADIYKLRIRVRGNLEWAPPRPQIIFNVHPAPTRKIAVAKQNYRCAGCGIRTDPDYIKRLRYCEYLGKYFCQCCHENAQMVVPSRILRKWDFSKYYVSNFSKDLLLKIWNDPLFNVQDINSALYRKVKLLNQVRLLRVQLYHMKNMFKTCRLAKELLDSFDVVPGHLTEDLHLYSLSDLTATKKGELGPRLAELTRAGAAHVERCMLCQAKGFICEFCQNEEDVIFPFELHKCRTCEECKACYHKTCFKSGRCPRCERLQARRELLAKQSLESYLSDYEEEPTEALALEATVLETT.

One can recognise an RUN domain in the interval 49 to 190 (WSKYGGLERL…PRLLAQIDAS (142 aa)). Residues 50 to 181 (SKYGGLERLC…CLEAVEQNNP (132 aa)) are interaction with PIK3C3. A Phosphoserine modification is found at Ser198. An interaction with YWHAB region spans residues 205 to 437 (SQSLTALPGS…ITIIVEDPIA (233 aa)). Low complexity predominate over residues 233–242 (SLQSMPQSSH). The tract at residues 233–423 (SLQSMPQSSH…TNIASRGAAG (191 aa)) is disordered. Residues Ser250 and Ser268 each carry the phosphoserine modification. The span at 270–319 (AETQTTPAPLPSDSTLAQDSPLTAQEMSDSTLTSPLEASWVSSQNDSPSD) shows a compositional bias: polar residues. The tract at residues 302-585 (TSPLEASWVS…DLEIQDADIR (284 aa)) is interaction with UVRAG. A compositionally biased stretch (low complexity) spans 339 to 371 (ASCESHSSNGESSSSHLFSSSSSQKLESAASSL). The span at 379-395 (QSQAGSVLRRSSFSEGQ) shows a compositional bias: polar residues. Phosphoserine occurs at positions 390, 412, 513, and 547. Residues 490–542 (AIELMKCNMMSQCLEEEEVEEEDSDREIQELKQKIRLRRQQIRTKNLLPAYRE) form an interaction with BECN1 region. Positions 547-566 (SFRVTSSSSQFSSRDSTQLS) are enriched in low complexity. The interval 547–579 (SFRVTSSSSQFSSRDSTQLSESGSAEDADDLEI) is disordered. An interaction with CYBA region spans residues 552 to 609 (SSSSQFSSRDSTQLSESGSAEDADDLEIQDADIRRSAVSNGKSSFSQNLSHCFLHSTS). A compositionally biased stretch (acidic residues) spans 570-579 (SAEDADDLEI). A Phosphoserine modification is found at Ser655. The interval 656 to 744 (PDDGQHADIY…HENAQMVVPS (89 aa)) is interaction with CARD9. Positions 705-956 (CAGCGIRTDP…ALEATVLETT (252 aa)) are interaction with Rab7.

In terms of assembly, associates with PI3K (PI3KC3/PI3K-III/class III phosphatidylinositol 3-kinase) complex II (PI3KC3-C2) in which the core composed of the catalytic subunit PIK3C3, the regulatory subunit PIK3R4 and BECN1 is associated with UVRAG; in the complex interacts directly with PI3KC3 and UVRAG. Interacts with Rab7 (RAB7A or RAB7B) (GTP-bound form); Rab7 and UVRAG compete for RUBCN binding; can interact simultaneously with Rab7 and the PI3K complex. Interacts with CYBA and CYBB; indicative for the association with the CYBA:CYBB NADPH oxidase heterodimer. Interacts with NOX4 and probably associates with the CYBA:NOX4 complex. Interacts with YWHAB and CARD9 in a competitive and stimulation-dependent manner; RUBCN exchanges interaction from YWHAB to CARD9 upon stimulation with beta-1,3-glucan.

It is found in the late endosome. The protein localises to the lysosome. It localises to the early endosome. Inhibits PIK3C3 activity; under basal conditions negatively regulates PI3K complex II (PI3KC3-C2) function in autophagy. Negatively regulates endosome maturation and degradative endocytic trafficking and impairs autophagosome maturation process. Can sequester UVRAG from association with a class C Vps complex (possibly the HOPS complex) and negatively regulates Rab7 activation. Its function is as follows. Involved in regulation of pathogen-specific host defense of activated macrophages. Following bacterial infection promotes NADH oxidase activity by association with CYBA thereby affecting TLR2 signaling and probably other TLR-NOX pathways. Stabilizes the CYBA:CYBB NADPH oxidase heterodimer, increases its association with TLR2 and its phagosome trafficking to induce antimicrobial burst of ROS and production of inflammatory cytokines. Following fungal or viral infection (implicating CLEC7A (dectin-1)-mediated myeloid cell activation or RIGI-dependent sensing of RNA viruses) negatively regulates pro-inflammatory cytokine production by association with CARD9 and sequestering it from signaling complexes. The sequence is that of Run domain Beclin-1-interacting and cysteine-rich domain-containing protein from Mus musculus (Mouse).